The primary structure comprises 550 residues: Phosphatidylinositol 4-kinase gamma 2 (550 aa).

2 consecutive Ubiquitin-like domains span residues 34–111 (SVLV…YDPL) and 112–190 (LVTV…VEDT). Residues 228–247 (VDGLNKGSPPVRSAEGTGGT) form a disordered region. Residues 234–532 (GSPPVRSAEG…SVLPASSEAT (299 aa)) form the PI3K/PI4K catalytic domain. A G-loop region spans residues 240 to 246 (SAEGTGG). Residues 241-247 (AEGTGGT), K263, and 359-362 (QMFM) each bind ATP. The interval 392-400 (ANADRHAGN) is catalytic loop. The activation loop stretch occupies residues 415–441 (PIDHGYCLPENFEDCTFEWLYWPQAKL). An ATP-binding site is contributed by D417.

This sequence belongs to the PI3/PI4-kinase family. Type II PI4K subfamily.

It localises to the membrane. It catalyses the reaction a 1,2-diacyl-sn-glycero-3-phospho-(1D-myo-inositol) + ATP = a 1,2-diacyl-sn-glycero-3-phospho-(1D-myo-inositol 4-phosphate) + ADP + H(+). In terms of biological role, the phosphorylation of phosphatidylinositol (PI) to PI4P is the first committed step in the generation of phosphatidylinositol 4,5-bisphosphate (PIP2), a precursor of the second messenger inositol 1,4,5-trisphosphate (InsP3). The polypeptide is Phosphatidylinositol 4-kinase gamma 2 (PI4KG2) (Arabidopsis thaliana (Mouse-ear cress)).